The primary structure comprises 227 residues: Large ribosomal subunit protein uL10c (227 aa).

Residues 1-47 (MEATFFTLPSSTSHSYPFSLKSHFNNSLTLPTHPHFKPKSKNLTIRS) constitute a chloroplast transit peptide.

This sequence belongs to the universal ribosomal protein uL10 family. As to quaternary structure, part of the 50S ribosomal subunit.

The protein localises to the plastid. Its subcellular location is the chloroplast. This protein binds directly to 23S ribosomal RNA. In Nicotiana tabacum (Common tobacco), this protein is Large ribosomal subunit protein uL10c (RPL10).